Consider the following 38-residue polypeptide: Potassium channel toxin alpha-KTx 3.17 (38 aa).

3 cysteine pairs are disulfide-bonded: C8–C28, C14–C33, and C18–C35.

The protein belongs to the short scorpion toxin superfamily. Potassium channel inhibitor family. Alpha-KTx 03 subfamily. In terms of tissue distribution, expressed by the venom gland.

The protein localises to the secreted. Functionally, completely inhibits the (125)I-kaliotoxin binding on rat brain synaptosomes with high-affinity (IC(50)=0.1 nM). Is a potent Kv1.3/KCNA3 ligand. In Buthus paris (Scorpion), this protein is Potassium channel toxin alpha-KTx 3.17.